Reading from the N-terminus, the 333-residue chain is Ribosomal protein L11 methyltransferase (333 aa).

S-adenosyl-L-methionine contacts are provided by T160, G181, D203, and N267.

Belongs to the methyltransferase superfamily. PrmA family.

The protein resides in the cytoplasm. It catalyses the reaction L-lysyl-[protein] + 3 S-adenosyl-L-methionine = N(6),N(6),N(6)-trimethyl-L-lysyl-[protein] + 3 S-adenosyl-L-homocysteine + 3 H(+). In terms of biological role, methylates ribosomal protein L11. This chain is Ribosomal protein L11 methyltransferase, found in Lachnoclostridium phytofermentans (strain ATCC 700394 / DSM 18823 / ISDg) (Clostridium phytofermentans).